The sequence spans 625 residues: Zinc finger protein 652-A (625 aa).

Residues 80 to 255 are disordered; sequence FFRDSKPINE…PSDKAKSEEK (176 aa). Over residues 82–100 the composition is skewed to basic and acidic residues; that stretch reads RDSKPINEVHSVKGERENS. Positions 101–127 are enriched in acidic residues; that stretch reads GESEEEEDDDDDDDDEDDEEGEEDEDE. A compositionally biased stretch (basic and acidic residues) spans 150–166; it reads KGDKGVAQDSSHIKTSS. Residues 167–186 are compositionally biased toward acidic residues; that stretch reads DDEEGDSGEDDQDSHEDEEN. Positions 240–255 are enriched in basic and acidic residues; that stretch reads PKEPKSPSDKAKSEEK. The C2H2-type 1 zinc finger occupies 258–281; that stretch reads LTCDKCPRVFNTRWYLEKHMNVTH. Residues 285–307 form a C2H2-type 2; degenerate zinc finger; sequence QICDKCGKKFVLESELSLHLQTD. 6 consecutive C2H2-type zinc fingers follow at residues 312–335, 342–364, 370–392, 398–420, 426–448, and 454–476; these read IQCI…KIVH, FSCE…LVAH, FTCE…SLQH, FRCE…MSIH, FMCQ…MKTH, and FICE…RRTH. A C2H2-type 9; degenerate zinc finger spans residues 482–505; it reads YPCDVCGMRFRFSNMLKAHKEKCF.

This sequence belongs to the krueppel C2H2-type zinc-finger protein family.

Its subcellular location is the nucleus. Functionally, may be involved in transcriptional regulation. This Xenopus laevis (African clawed frog) protein is Zinc finger protein 652-A (znf652-a).